We begin with the raw amino-acid sequence, 593 residues long: Serine/threonine-protein kinase PAK 4 (593 aa).

Residues 11–24 enclose the CRIB domain; it reads ISAPSNFEHRVHTG. Residues 25–322 form a linker region; the sequence is FDQHEQKFTG…VVDPGDPRSY (298 aa). Phosphoserine is present on Ser-41. The residue at position 78 (Lys-78) is an N6-methyllysine. Residues 95–303 are disordered; that stretch reads TRSNSLRRES…PQREPQRVSH (209 aa). A Phosphoserine modification is found at Ser-104. A compositionally biased stretch (basic and acidic residues) spans 118–133; that stretch reads LEERAAPARMAPDKAG. Ser-148 is subject to Phosphoserine. Basic and acidic residues predominate over residues 149 to 164; sequence GDRRRVGPEKRPKSSR. The residue at position 181 (Ser-181) is a Phosphoserine. Positions 184–197 are enriched in polar residues; it reads DVSTPQPGSLTSGT. Thr-187 carries the post-translational modification Phosphothreonine. Ser-195 bears the Phosphoserine mark. Thr-207 is subject to Phosphothreonine. The span at 238 to 258 shows a compositional bias: low complexity; sequence AAPQSSSSSRPPTRARGAPSP. Phosphoserine is present on residues Ser-257 and Ser-266. Low complexity predominate over residues 267 to 280; it reads EPQLAPPARALAAP. The span at 281 to 292 shows a compositional bias: pro residues; the sequence is AVPPAPGPPGPR. A Phosphoserine modification is found at Ser-293. Residues 294 to 303 are compositionally biased toward basic and acidic residues; it reads PQREPQRVSH. Positions 323–574 constitute a Protein kinase domain; sequence LDNFIKIGEG…AAELLKHPFL (252 aa). Residues 329 to 337 and Lys-352 each bind ATP; that span reads IGEGSTGIV. Asp-442 acts as the Proton acceptor in catalysis. Ser-476 carries the post-translational modification Phosphoserine; by autocatalysis.

The protein belongs to the protein kinase superfamily. STE Ser/Thr protein kinase family. STE20 subfamily. As to quaternary structure, interacts tightly with GTP-bound but not GDP-bound CDC42/p21 and weakly with RAC1. Interacts with FGFR2 and GRB2. Interacts with INKA1. Interacts with SH3RF2. Interacts with RHOU and PAXI; the PAK4-RHOU complex protects RHOU from ubiquitination and acts as a scaffold to suppport paxillin/PAXI phosphorylation. Autophosphorylated on serine residues when activated by CDC42/p21. Phosphorylated on tyrosine residues upon stimulation of FGFR2. Methylated by SETD6. Post-translationally, polyubiquitinated, leading to its proteasomal degradation.

It is found in the cytoplasm. It catalyses the reaction L-seryl-[protein] + ATP = O-phospho-L-seryl-[protein] + ADP + H(+). It carries out the reaction L-threonyl-[protein] + ATP = O-phospho-L-threonyl-[protein] + ADP + H(+). Its activity is regulated as follows. Inhibited by INKA1; which inhibits the serine/threonine-protein kinase activity by binding PAK4 in a substrate-like manner. Functionally, serine/threonine protein kinase that plays a role in a variety of different signaling pathways including cytoskeleton regulation, cell migration, growth, proliferation or cell survival. Activation by various effectors including growth factor receptors or active CDC42 and RAC1 results in a conformational change and a subsequent autophosphorylation on several serine and/or threonine residues. Phosphorylates and inactivates the protein phosphatase SSH1, leading to increased inhibitory phosphorylation of the actin binding/depolymerizing factor cofilin. Decreased cofilin activity may lead to stabilization of actin filaments. Phosphorylates LIMK1, a kinase that also inhibits the activity of cofilin. Phosphorylates integrin beta5/ITGB5 and thus regulates cell motility. Phosphorylates ARHGEF2 and activates the downstream target RHOA that plays a role in the regulation of assembly of focal adhesions and actin stress fibers. Stimulates cell survival by phosphorylating the BCL2 antagonist of cell death BAD. Alternatively, inhibits apoptosis by preventing caspase-8 binding to death domain receptors in a kinase independent manner. Plays a role in cell-cycle progression by controlling levels of the cell-cycle regulatory protein CDKN1A and by phosphorylating RAN. Promotes kinase-independent stabilization of RHOU, thereby contributing to focal adhesion disassembly during cell migration. This chain is Serine/threonine-protein kinase PAK 4, found in Mus musculus (Mouse).